A 555-amino-acid chain; its full sequence is NAD-dependent protein deacetylase sirtuin-1 (555 aa).

The Nuclear localization signal motif lies at 39–46; that stretch reads PPKRKKRK. Residues 44–304 enclose the Deacetylase sirtuin-type domain; sequence KRKDINTIED…NELCHRLGGE (261 aa). An N6-acetyllysine modification is found at Lys46. The tract at residues 64-67 is required for interaction with the sumoylated form of CCAR2; it reads IIVL. NAD(+) is bound by residues 69–88 and 153–156; these read GAGV…DGIY and QNID. His171 functions as the Proton acceptor in the catalytic mechanism. Residues Cys179 and Cys182 each coordinate Zn(2+). At Lys185 the chain carries N6-acetyllysine. Residues Cys203 and Cys206 each contribute to the Zn(2+) site. Residues Cys203 and Cys206 each carry the S-nitrosocysteine modification. Lys238 carries the post-translational modification N6-acetyllysine. Residues 241–247 carry the Nuclear export signal motif; that stretch reads VDLLIVI. NAD(+)-binding positions include 248-250, 273-275, and Cys290; these read GSS and NRE. Lys321 is modified (N6-acetyllysine). The segment at 335–354 is disordered; it reads LPPTPLHISEDSSSPERTVP. Thr338 bears the Phosphothreonine mark. The residue at position 343 (Ser343) is a Phosphoserine. A compositionally biased stretch (polar residues) spans 345-354; the sequence is DSSSPERTVP. Thr352 carries the phosphothreonine modification. At Lys417 the chain carries N6-acetyllysine. Residues Ser466 and Ser468 each carry the phosphoserine modification. A disordered region spans residues 469–529; sequence EDDALSSSSC…GGSGADGGDQ (61 aa). Over residues 473-493 the composition is skewed to low complexity; that stretch reads LSSSSCGSNSDSGTCQSPSLE. Acidic residues predominate over residues 494–514; the sequence is EPLEDESEIEEFYNGLEDDAD. Ser552 is modified (phosphoserine).

This sequence belongs to the sirtuin family. Class I subfamily. In terms of assembly, interacts with XBP1 isoform 2. Found in a complex with PCAF and MYOD1. Interacts with FOXO1; the interaction deacetylates FOXO1, resulting in its nuclear retention and promotion of its transcriptional activity Component of the eNoSC complex, composed of SIRT1, SUV39H1 and RRP8. Interacts with HES1, HEY2 and PML. Interacts with RPS19BP1/AROS. Interacts with CCAR2 (via N-terminus); the interaction disrupts the interaction between SIRT1 and p53/TP53. Interacts with SETD7; the interaction induces the dissociation of SIRT1 from p53/TP53 and increases p53/TP53 activity. Interacts with MYCN, NR1I2, CREBZF, TSC2, TLE1, FOS, JUN, NR0B2, PPARG, NCOR, IRS1, IRS2 and NMNAT1. Interacts with HNF1A; the interaction occurs under nutrient restriction. Interacts with SUZ12; the interaction mediates the association with the PRC4 histone methylation complex which is specific as an association with PCR2 and PCR3 complex variants is not found. Interacts with HIV-1 tat. Interacts with BCL6; leads to a epigenetic repression of specific target genes. Interacts with CLOCK, BMAL1 and PER2. Interacts with PPARA; the interaction seems to be modulated by NAD(+) levels. Interacts with NR1H3 and this interaction is inhibited in the presence of CCAR2. Interacts with CHEK2. Interacts with p53/TP53. Exhibits a preferential interaction with sumoylated CCAR2 over its unmodified form. Interacts with PACS2. Interacts with SIRT7. Interacts with PUS7. Interacts with TULP3. Interacts with MORN3; the interaction enhances the ubiquitination of p53/TP53. Requires Zn(2+) as cofactor. Methylated on multiple lysine residues; methylation is enhanced after DNA damage and is dispensable for deacetylase activity toward p53/TP53. In terms of processing, phosphorylated. Phosphorylated by STK4/MST1, resulting in inhibition of SIRT1-mediated p53/TP53 deacetylation. Phosphorylation by MAPK8/JNK1 at Thr-338 leads to increased nuclear localization and enzymatic activity. Phosphorylation at Thr-338 by DYRK1A and DYRK3 activates deacetylase activity and promotes cell survival. Phosphorylated by CaMK2, leading to increased p53/TP53 and NF-kappa-B p65/RELA deacetylation activity. Post-translationally, S-nitrosylated by GAPDH, leading to inhibit the NAD-dependent protein deacetylase activity. Acetylated at various Lys residues. Deacetylated via an autocatalytic mechanism. Autodeacetylation at Lys-46 promotes its protein deacetylase activity. In terms of processing, ubiquitinated; leading to degradation. Deubiquitinated by USP22; leading to stabilization.

It is found in the nucleus. Its subcellular location is the PML body. The protein resides in the cytoplasm. The catalysed reaction is N(6)-acetyl-L-lysyl-[protein] + NAD(+) + H2O = 2''-O-acetyl-ADP-D-ribose + nicotinamide + L-lysyl-[protein]. It carries out the reaction N(6)-propanoyl-L-lysyl-[protein] + NAD(+) + H2O = 3''-O-propanoyl-ADP-D-ribose + nicotinamide + L-lysyl-[protein]. The enzyme catalyses N(6)-(2E)-butenoyl-L-lysyl-[protein] + NAD(+) + H2O = 2''-O-(2E)-but-2-enoyl-ADP-D-ribose + nicotinamide + L-lysyl-[protein]. Its activity is regulated as follows. Inhibited by nicotinamide. Activated by resveratrol (3,5,4'-trihydroxy-trans-stilbene), butein (3,4,2',4'-tetrahydroxychalcone), piceatannol (3,5,3',4'-tetrahydroxy-trans-stilbene), Isoliquiritigenin (4,2',4'-trihydroxychalcone), fisetin (3,7,3',4'-tetrahydroxyflavone) and quercetin (3,5,7,3',4'-pentahydroxyflavone). MAPK8/JNK1 and RPS19BP1/AROS act as positive regulators of deacetylation activity. Negatively regulated by CCAR2. In terms of biological role, NAD-dependent protein deacetylase that links transcriptional regulation directly to intracellular energetics and participates in the coordination of several separated cellular functions such as cell cycle, response to DNA damage, metabolism, apoptosis and autophagy. Can modulate chromatin function through deacetylation of histones and can promote alterations in the methylation of histones and DNA, leading to transcriptional repression. Deacetylates a broad range of transcription factors and coregulators, thereby regulating target gene expression positively and negatively. Serves as a sensor of the cytosolic ratio of NAD(+)/NADH which is altered by glucose deprivation and metabolic changes associated with caloric restriction. Is essential in skeletal muscle cell differentiation and in response to low nutrients mediates the inhibitory effect on skeletal myoblast differentiation which also involves 5'-AMP-activated protein kinase (AMPK) and nicotinamide phosphoribosyltransferase (NAMPT). Component of the eNoSC (energy-dependent nucleolar silencing) complex, a complex that mediates silencing of rDNA in response to intracellular energy status and acts by recruiting histone-modifying enzymes. The eNoSC complex is able to sense the energy status of cell: upon glucose starvation, elevation of NAD(+)/NADP(+) ratio activates SIRT1, leading to histone H3 deacetylation followed by dimethylation of H3 at 'Lys-9' (H3K9me2) by SUV39H1 and the formation of silent chromatin in the rDNA locus. Deacetylates 'Lys-266' of SUV39H1, leading to its activation. Inhibits skeletal muscle differentiation by deacetylating PCAF and MYOD1. Deacetylates H2A and 'Lys-26' of H1-4. Deacetylates 'Lys-16' of histone H4 (in vitro). Involved in NR0B2/SHP corepression function through chromatin remodeling: Recruited to LRH1 target gene promoters by NR0B2/SHP thereby stimulating histone H3 and H4 deacetylation leading to transcriptional repression. Proposed to contribute to genomic integrity via positive regulation of telomere length; however, reports on localization to pericentromeric heterochromatin are conflicting. Proposed to play a role in constitutive heterochromatin (CH) formation and/or maintenance through regulation of the available pool of nuclear SUV39H1. Upon oxidative/metabolic stress decreases SUV39H1 degradation by inhibiting SUV39H1 polyubiquitination by MDM2. This increase in SUV39H1 levels enhances SUV39H1 turnover in CH, which in turn seems to accelerate renewal of the heterochromatin which correlates with greater genomic integrity during stress response. Deacetylates 'Lys-382' of p53/TP53 and impairs its ability to induce transcription-dependent proapoptotic program and modulate cell senescence. Deacetylates TAF1B and thereby represses rDNA transcription by the RNA polymerase I. Deacetylates MYC, promotes the association of MYC with MAX and decreases MYC stability leading to compromised transformational capability. Deacetylates FOXO3 in response to oxidative stress thereby increasing its ability to induce cell cycle arrest and resistance to oxidative stress but inhibiting FOXO3-mediated induction of apoptosis transcriptional activity; also leading to FOXO3 ubiquitination and protesomal degradation. Appears to have a similar effect on MLLT7/FOXO4 in regulation of transcriptional activity and apoptosis. Deacetylates DNMT1; thereby impairs DNMT1 methyltransferase-independent transcription repressor activity, modulates DNMT1 cell cycle regulatory function and DNMT1-mediated gene silencing. Deacetylates RELA/NF-kappa-B p65 thereby inhibiting its transactivating potential and augments apoptosis in response to TNF-alpha. Deacetylates HIF1A, KAT5/TIP60, RB1 and HIC1. Deacetylates FOXO1 resulting in its nuclear retention and enhancement of its transcriptional activity leading to increased gluconeogenesis in liver. Inhibits E2F1 transcriptional activity and apoptotic function, possibly by deacetylation. Involved in HES1- and HEY2-mediated transcriptional repression. In cooperation with MYCN seems to be involved in transcriptional repression of DUSP6/MAPK3 leading to MYCN stabilization by phosphorylation at 'Ser-62'. Deacetylates MEF2D. Required for antagonist-mediated transcription suppression of AR-dependent genes which may be linked to local deacetylation of histone H3. Represses HNF1A-mediated transcription. Required for the repression of ESRRG by CREBZF. Deacetylates NR1H3 AND NR1H2 and deacetylation of NR1H3 at 'Lys-434' positively regulates transcription of NR1H3:RXR target genes, promotes NR1H3 proteasomal degradation and results in cholesterol efflux; a promoter clearing mechanism after reach round of transcription is proposed. Involved in lipid metabolism: deacetylates LPIN1, thereby inhibiting diacylglycerol synthesis. Implicated in regulation of adipogenesis and fat mobilization in white adipocytes by repression of PPARG which probably involves association with NCOR1 and SMRT/NCOR2. Deacetylates p300/EP300 and PRMT1. Deacetylates ACSS2 leading to its activation, and HMGCS1 deacetylation. Involved in liver and muscle metabolism. Through deacetylation and activation of PPARGC1A is required to activate fatty acid oxidation in skeletal muscle under low-glucose conditions and is involved in glucose homeostasis. Involved in regulation of PPARA and fatty acid beta-oxidation in liver. Involved in positive regulation of insulin secretion in pancreatic beta cells in response to glucose; the function seems to imply transcriptional repression of UCP2. Proposed to deacetylate IRS2 thereby facilitating its insulin-induced tyrosine phosphorylation. Deacetylates SREBF1 isoform SREBP-1C thereby decreasing its stability and transactivation in lipogenic gene expression. Involved in DNA damage response by repressing genes which are involved in DNA repair, such as XPC and TP73, deacetylating XRCC6/Ku70, and facilitating recruitment of additional factors to sites of damaged DNA, such as SIRT1-deacetylated NBN can recruit ATM to initiate DNA repair and SIRT1-deacetylated XPA interacts with RPA2. Also involved in DNA repair of DNA double-strand breaks by homologous recombination and specifically single-strand annealing independently of XRCC6/Ku70 and NBN. Promotes DNA double-strand breaks by mediating deacetylation of SIRT6. Transcriptional suppression of XPC probably involves an E2F4:RBL2 suppressor complex and protein kinase B (AKT) signaling. Transcriptional suppression of TP73 probably involves E2F4 and PCAF. Deacetylates WRN thereby regulating its helicase and exonuclease activities and regulates WRN nuclear translocation in response to DNA damage. Deacetylates APEX1 at 'Lys-6' and 'Lys-7' and stimulates cellular AP endonuclease activity by promoting the association of APEX1 to XRCC1. Catalyzes deacetylation of ERCC4/XPF, thereby impairing interaction with ERCC1 and nucleotide excision repair (NER). Increases p53/TP53-mediated transcription-independent apoptosis by blocking nuclear translocation of cytoplasmic p53/TP53 and probably redirecting it to mitochondria. Deacetylates XRCC6/Ku70 at 'Lys-539' and 'Lys-542' causing it to sequester BAX away from mitochondria thereby inhibiting stress-induced apoptosis. Is involved in autophagy, presumably by deacetylating ATG5, ATG7 and MAP1LC3B/ATG8. Deacetylates AKT1 which leads to enhanced binding of AKT1 and PDK1 to PIP3 and promotes their activation. Proposed to play role in regulation of STK11/LBK1-dependent AMPK signaling pathways implicated in cellular senescence which seems to involve the regulation of the acetylation status of STK11/LBK1. Can deacetylate STK11/LBK1 and thereby increase its activity, cytoplasmic localization and association with STRAD; however, the relevance of such activity in normal cells is unclear. In endothelial cells is shown to inhibit STK11/LBK1 activity and to promote its degradation. Deacetylates SMAD7 at 'Lys-64' and 'Lys-70' thereby promoting its degradation. Deacetylates CIITA and augments its MHC class II transactivation and contributes to its stability. Deacetylates MECOM/EVI1. Deacetylates PML at 'Lys-487' and this deacetylation promotes PML control of PER2 nuclear localization. During the neurogenic transition, represses selective NOTCH1-target genes through histone deacetylation in a BCL6-dependent manner and leading to neuronal differentiation. Regulates the circadian expression of several core clock genes, including BMAL1, RORC, PER2 and CRY1 and plays a critical role in maintaining a controlled rhythmicity in histone acetylation, thereby contributing to circadian chromatin remodeling. Deacetylates BMAL1 and histones at the circadian gene promoters in order to facilitate repression by inhibitory components of the circadian oscillator. Deacetylates PER2, facilitating its ubiquitination and degradation by the proteasome. Protects cardiomyocytes against palmitate-induced apoptosis. Deacetylates XBP1 isoform 2; deacetylation decreases protein stability of XBP1 isoform 2 and inhibits its transcriptional activity. Deacetylates PCK1 and directs its activity toward phosphoenolpyruvate production promoting gluconeogenesis. Involved in the CCAR2-mediated regulation of PCK1 and NR1D1. Deacetylates CTNB1 at 'Lys-49'. In POMC (pro-opiomelanocortin) neurons, required for leptin-induced activation of PI3K signaling. In addition to protein deacetylase activity, also acts as a protein-lysine deacylase by mediating protein depropionylation and decrotonylation. Mediates depropionylation of Osterix (SP7). Catalyzes decrotonylation of histones; it however does not represent a major histone decrotonylase. Deacetylates SOX9; promoting SOX9 nuclear localization and transactivation activity. Involved in the regulation of centrosome duplication. Deacetylates CENATAC in G1 phase, allowing for SASS6 accumulation on the centrosome and subsequent procentriole assembly. Deacetylates NDC80/HEC1. The sequence is that of NAD-dependent protein deacetylase sirtuin-1 from Rattus norvegicus (Rat).